The chain runs to 329 residues: Ubiquitin carboxyl-terminal hydrolase isozyme L5 (329 aa).

The UCH catalytic domain occupies 7 to 225 (EWCLMESDPG…IRFNLMAIVS (219 aa)). K47 is modified (N6-succinyllysine). Residue C88 is the Nucleophile of the active site. At K158 the chain carries N6-acetyllysine. Residue H164 is the Proton donor of the active site. K289 carries the N6-succinyllysine modification. In terms of domain architecture, ULD spans 291–319 (NYLPFIMELLKTLAEHQQLIPLVEKAKEK). The interval 313–329 (VEKAKEKQNAKKAQETK) is interaction with ADRM1.

It belongs to the peptidase C12 family. Component of the 19S (PA700) regulatory complex of the 26S proteasome. Interacts with ADRM1 and NFRKB. Component of the INO80 complex; specifically part of a complex module associated with N-terminus of INO80.

The protein resides in the cytoplasm. Its subcellular location is the nucleus. It catalyses the reaction Thiol-dependent hydrolysis of ester, thioester, amide, peptide and isopeptide bonds formed by the C-terminal Gly of ubiquitin (a 76-residue protein attached to proteins as an intracellular targeting signal).. Its activity is regulated as follows. Activated by ADRM1. Inhibited by interaction with NFRKB. Functionally, protease that specifically cleaves 'Lys-48'-linked polyubiquitin chains. Deubiquitinating enzyme associated with the 19S regulatory subunit of the 26S proteasome. Putative regulatory component of the INO80 complex; however is inactive in the INO80 complex and is activated by a transient interaction of the INO80 complex with the proteasome via ADRM1. This chain is Ubiquitin carboxyl-terminal hydrolase isozyme L5 (UCHL5), found in Sus scrofa (Pig).